The primary structure comprises 558 residues: MELLSLGSRQRPSLHEIGLSIISLTTCFVCAFAVSFVALAIYRAHLHPLAAIPGPKLAALSSAWQAYHARNGRMLVLGKTLHAVYGPIVRVGPNEVWLNSPDAFRSIYGAGNGYEKSDFYLSTVLNKPAIDWGLNLHFPDTLDLLSEFDTRRYRLQRRLVGPVYQANNIKKFQNAVDDVIERAVAQLRTLDGAEVDLKEWMHIIVVECLGAVVLSWSPGYIAAETDGGTGTQSYLGWKRKSVFGLFPLVTTATFFSKGLGRLFSNLWGVTFPTPKNFKPFFTPVYHKSSKRINVALRQNAGSNTRPKPPKRKQDTQPNDLLTDLIQLHKAKAEFTEQYLRRMAITNFGAGHETMCSALTSIMAMVGSHPAVQGRIIDELGSHGYLPSTCTSKDQKPIAGQTHIDYDAAASLTYCLAAIKEAQRLYPVIGMSLSRKVPASGLSVHDVYIPPGTTVGCSPVSLHRNTTIFGDDASCFNPERWLQDNVEARRAMERYNLTWGGGGRTCPGRHLAEMVVWKVVPALLREFEVVVTKMPNDVEVEYYFMAMLTGVRARFIPRR.

Residues 21–41 (IISLTTCFVCAFAVSFVALAI) form a helical membrane-spanning segment. The segment at 298–317 (QNAGSNTRPKPPKRKQDTQP) is disordered. Asparagine 464 and asparagine 495 each carry an N-linked (GlcNAc...) asparagine glycan. Cysteine 505 is a binding site for heme.

This sequence belongs to the cytochrome P450 family. It depends on heme as a cofactor.

The protein localises to the membrane. The protein operates within antibiotic biosynthesis. In terms of biological role, cytochrome P450 monooxygenase; part of the gene cluster that mediates the biosynthesis of sordarin and hypoxysordarin, glycoside antibiotics with a unique tetracyclic diterpene aglycone structure. First, the geranylgeranyl diphosphate synthase sdnC constructs GGDP from farnesyl diphosphate and isopentenyl diphosphate. The diterpene cyclase sdnA then catalyzes the cyclization of GGDP to afford cycloaraneosene. Cycloaraneosene is then hydroxylated four times by the putative cytochrome P450 monooxygenases sdnB, sdnE, sdnF and sdnH to give a hydroxylated cycloaraneosene derivative such as cycloaraneosene-8,9,13,19-tetraol. Although the order of the hydroxylations is unclear, at least C8, C9 and C13 of the cycloaraneosene skeleton are hydroxylated before the sordaricin formation. Dehydration of the 13-hydroxy group of the hydroxylated cycloaraneosene derivative might be catalyzed by an unassigned hypothetical protein such as sdnG and sdnP to construct the cyclopentadiene moiety. The FAD-dependent oxidoreductase sdnN is proposed to catalyze the oxidation at C9 of the hydroxylated cycloaraneosene derivative and also catalyze the Baeyer-Villiger oxidation to give the lactone intermediate. The presumed lactone intermediate would be hydrolyzed to give an acrolein moiety and a carboxylate moiety. Then, [4+2]cycloaddition would occur between the acrolein moiety and the cyclopentadiene moiety to give sordaricin. SdnN might also be involved in the [4+2]cycloaddition after the hypothesized oxidation to accommodate the oxidized product and prompt the [4+2]cycloaddition. GDP-6-deoxy-D-altrose may be biosynthesized from GDP-D-mannose by the putative GDP-mannose-4,6-dehydratase sdnI and the short-chain dehydrogenase sdnK. The glycosyltransferase sdnJ catalyzes the attachment of 6-deoxy-D-altrose onto the 19-hydroxy group of sordaricin to give 4'-O-demethylsordarin. The methyltransferase sdnD would complete the biosynthesis of sordarin. Sordarin can be further modified into hypoxysordarin. The unique acyl chain at the 3'-hydroxy group of hypoxysordarin would be constructed by an iterative type I PKS sdnO and the trans-acting polyketide methyltransferase sdnL. SdnL would be responsible for the introduction of an alpha-methyl group of the polyketide chain. Alternatively, the beta-lactamase-like protein sdnR might be responsible for the cleavage and transfer of the polyketide chain from the PKS sdnO to sordarin. Two putative cytochrome P450 monooxygenases, sdnQ and sdnT, might catalyze the epoxidations of the polyketide chain to complete the biosynthesis of hypoxysordarin. Transcriptional regulators sdnM and sdnS are presumably encoded for the transcriptional regulation of the expression of the sdn gene cluster. This Sordaria araneosa (Pleurage araneosa) protein is Cytochrome P450 monooxygenase sdnT.